The chain runs to 547 residues: Nitrosoguanidine resistance protein SNG1 (547 aa).

Residues 35 to 86 (NQRFAEGSGHSSDLAKSLEDYRPPDEKPSSLSSVGEGGANEEEKGGNDGGPL) are disordered. A compositionally biased stretch (basic and acidic residues) spans 50 to 62 (KSLEDYRPPDEKP). Thr91 is modified (phosphothreonine). The next 8 membrane-spanning stretches (helical) occupy residues 109–129 (FVLN…IYWG), 159–179 (ISAI…IYNA), 318–338 (ILMA…VLQL), 363–383 (LISW…SAIF), 394–414 (GGFV…GGAN), 418–438 (LSLV…TWII), 457–477 (YGYI…FLNL), and 488–508 (ILVA…KFAG). Low complexity predominate over residues 526–536 (ATQRASRPAEA). The segment at 526–547 (ATQRASRPAEANTDKNNNPPGN) is disordered.

To yeast YJR015W.

The protein resides in the membrane. Functionally, may function as a N-methyl-N'nitro-N-nitrosoguanidine (MNNG) export permease. The polypeptide is Nitrosoguanidine resistance protein SNG1 (SNG1) (Saccharomyces cerevisiae (strain ATCC 204508 / S288c) (Baker's yeast)).